We begin with the raw amino-acid sequence, 467 residues long: 3-isopropylmalate dehydratase large subunit (467 aa).

Residues C347, C407, and C410 each coordinate [4Fe-4S] cluster.

Belongs to the aconitase/IPM isomerase family. LeuC type 1 subfamily. In terms of assembly, heterodimer of LeuC and LeuD. The cofactor is [4Fe-4S] cluster.

It catalyses the reaction (2R,3S)-3-isopropylmalate = (2S)-2-isopropylmalate. It participates in amino-acid biosynthesis; L-leucine biosynthesis; L-leucine from 3-methyl-2-oxobutanoate: step 2/4. Functionally, catalyzes the isomerization between 2-isopropylmalate and 3-isopropylmalate, via the formation of 2-isopropylmaleate. The sequence is that of 3-isopropylmalate dehydratase large subunit from Pelagibacter ubique (strain HTCC1062).